Consider the following 65-residue polypeptide: Large ribosomal subunit protein bL35 (65 aa).

Belongs to the bacterial ribosomal protein bL35 family.

The polypeptide is Large ribosomal subunit protein bL35 (Rubrobacter xylanophilus (strain DSM 9941 / JCM 11954 / NBRC 16129 / PRD-1)).